We begin with the raw amino-acid sequence, 493 residues long: 3-octaprenyl-4-hydroxybenzoate carboxy-lyase (493 aa).

Residue Asn-172 participates in Mn(2+) binding. Prenylated FMN is bound by residues 175–177, 189–191, and 194–195; these read IYR, RWL, and RG. Glu-238 is a binding site for Mn(2+). Asp-287 (proton donor) is an active-site residue.

Belongs to the UbiD family. Homohexamer. The cofactor is prenylated FMN. Mn(2+) is required as a cofactor.

The protein resides in the cell membrane. The catalysed reaction is a 4-hydroxy-3-(all-trans-polyprenyl)benzoate + H(+) = a 2-(all-trans-polyprenyl)phenol + CO2. Its pathway is cofactor biosynthesis; ubiquinone biosynthesis. Catalyzes the decarboxylation of 3-octaprenyl-4-hydroxy benzoate to 2-octaprenylphenol, an intermediate step in ubiquinone biosynthesis. The sequence is that of 3-octaprenyl-4-hydroxybenzoate carboxy-lyase from Shewanella pealeana (strain ATCC 700345 / ANG-SQ1).